Reading from the N-terminus, the 191-residue chain is Protein Ves (191 aa).

The protein belongs to the Ves family.

The sequence is that of Protein Ves from Shigella flexneri serotype 5b (strain 8401).